We begin with the raw amino-acid sequence, 264 residues long: MNKVTTKTLFEKKQKGEKITMITAYDYTFAKIFDSCSVDILLVGDSLGMVILGYDSTIPVTMDDMEHHVRAVSRGAKYSMVVADMPFLSYHTTIEEAVKNAGRLIRAGAYAVKMEGCDDVYDKIEAVIKAQIPVMGHLGLTPQSVNIFGGYDLRAKEEAEAKKLVEDAKKLEKAGVFAIVLEKVPSHVAKEVQRSLNVPVIGIGAGPYCDGQVLVCYDMLGMYEDFKPKFVKRYAEVGNMIKDAVTRYIEEVKKGEFPGKEHSY.

Mg(2+) contacts are provided by D45 and D84. 3-methyl-2-oxobutanoate is bound by residues 45-46, D84, and K113; that span reads DS. E115 contacts Mg(2+). E182 acts as the Proton acceptor in catalysis.

The protein belongs to the PanB family. As to quaternary structure, homodecamer; pentamer of dimers. Requires Mg(2+) as cofactor.

It is found in the cytoplasm. The enzyme catalyses 3-methyl-2-oxobutanoate + (6R)-5,10-methylene-5,6,7,8-tetrahydrofolate + H2O = 2-dehydropantoate + (6S)-5,6,7,8-tetrahydrofolate. It functions in the pathway cofactor biosynthesis; (R)-pantothenate biosynthesis; (R)-pantoate from 3-methyl-2-oxobutanoate: step 1/2. Functionally, catalyzes the reversible reaction in which hydroxymethyl group from 5,10-methylenetetrahydrofolate is transferred onto alpha-ketoisovalerate to form ketopantoate. The protein is 3-methyl-2-oxobutanoate hydroxymethyltransferase of Caldicellulosiruptor bescii (strain ATCC BAA-1888 / DSM 6725 / KCTC 15123 / Z-1320) (Anaerocellum thermophilum).